The sequence spans 593 residues: Putative auxin response factor 15 (593 aa).

The TF-B3 DNA-binding region spans 126–228 (FTKVLTASDI…ELRVGIRRAR (103 aa)). One can recognise a PB1 domain in the interval 511–592 (RTCTKVQMQG…MVKRIYIQKR (82 aa)).

This sequence belongs to the ARF family. As to quaternary structure, homodimers and heterodimers.

It is found in the nucleus. Its function is as follows. Auxin response factors (ARFs) are transcriptional factors that bind specifically to the DNA sequence 5'-TGTCTC-3' found in the auxin-responsive promoter elements (AuxREs). Could act as transcriptional activator or repressor. Formation of heterodimers with Aux/IAA proteins may alter their ability to modulate early auxin response genes expression. The sequence is that of Putative auxin response factor 15 (ARF15) from Arabidopsis thaliana (Mouse-ear cress).